The sequence spans 221 residues: 2-amino-5-formylamino-6-ribosylaminopyrimidin-4(3H)-one 5'-monophosphate deformylase (221 aa).

Positions 29, 31, 40, and 108 each coordinate Fe cation.

The protein belongs to the creatininase superfamily. FAPy deformylase family. As to quaternary structure, homodimer. It depends on Fe(2+) as a cofactor. Zn(2+) serves as cofactor.

It catalyses the reaction 2-amino-5-formylamino-6-(5-phospho-D-ribosylamino)pyrimidin-4(3H)-one + H2O = 2,5-diamino-6-(1-D-ribosylamino)pyrimidin-4(3H)-one 5'-phosphate + formate + H(+). It functions in the pathway cofactor biosynthesis; coenzyme F420 biosynthesis. Its pathway is cofactor biosynthesis; riboflavin biosynthesis. Functionally, catalyzes the hydrolysis of the formamide of 2-amino-5-formylamino-6-ribosylamino-4(3H)-pyrimidinone 5'-monophosphate (FAPy) to form 2,5-diamino-6-ribosylamino-4(3H)-pyrimidinone 5'-phosphate (APy). The polypeptide is 2-amino-5-formylamino-6-ribosylaminopyrimidin-4(3H)-one 5'-monophosphate deformylase (Methanococcus maripaludis (strain DSM 14266 / JCM 13030 / NBRC 101832 / S2 / LL)).